Reading from the N-terminus, the 206-residue chain is Large ribosomal subunit protein uL22m (206 aa).

The N-terminal 40 residues, 1–40, are a transit peptide targeting the mitochondrion; it reads MAAALLRELGALWVPNLRIWTTQMLRVLPQSCIHTSTSLD.

This sequence belongs to the universal ribosomal protein uL22 family. As to quaternary structure, component of the mitochondrial ribosome large subunit (39S) which comprises a 16S rRNA and about 50 distinct proteins.

The protein localises to the mitochondrion. The sequence is that of Large ribosomal subunit protein uL22m (Mrpl22) from Rattus norvegicus (Rat).